We begin with the raw amino-acid sequence, 335 residues long: Methylthioribose-1-phosphate isomerase (335 aa).

Residues arginine 47 to alanine 49, arginine 81, and glutamine 184 contribute to the substrate site. The active-site Proton donor is aspartate 225. Asparagine 235–lysine 236 lines the substrate pocket.

It belongs to the eIF-2B alpha/beta/delta subunits family. MtnA subfamily.

The catalysed reaction is 5-(methylsulfanyl)-alpha-D-ribose 1-phosphate = 5-(methylsulfanyl)-D-ribulose 1-phosphate. It functions in the pathway amino-acid biosynthesis; L-methionine biosynthesis via salvage pathway; L-methionine from S-methyl-5-thio-alpha-D-ribose 1-phosphate: step 1/6. Functionally, catalyzes the interconversion of methylthioribose-1-phosphate (MTR-1-P) into methylthioribulose-1-phosphate (MTRu-1-P). This Synechococcus sp. (strain CC9902) protein is Methylthioribose-1-phosphate isomerase.